A 249-amino-acid polypeptide reads, in one-letter code: tRNA (guanine-N(1)-)-methyltransferase (249 aa).

S-adenosyl-L-methionine-binding positions include G113 and 133–138 (IGDYVL).

It belongs to the RNA methyltransferase TrmD family. In terms of assembly, homodimer.

The protein resides in the cytoplasm. The catalysed reaction is guanosine(37) in tRNA + S-adenosyl-L-methionine = N(1)-methylguanosine(37) in tRNA + S-adenosyl-L-homocysteine + H(+). Functionally, specifically methylates guanosine-37 in various tRNAs. The polypeptide is tRNA (guanine-N(1)-)-methyltransferase (Aeromonas hydrophila subsp. hydrophila (strain ATCC 7966 / DSM 30187 / BCRC 13018 / CCUG 14551 / JCM 1027 / KCTC 2358 / NCIMB 9240 / NCTC 8049)).